Here is a 673-residue protein sequence, read N- to C-terminus: UvrABC system protein B (673 aa).

The region spanning 24–182 is the Helicase ATP-binding domain; the sequence is EGVERNDPAQ…YSFVEILYNR (159 aa). 37-44 contributes to the ATP binding site; that stretch reads GVTGSGKT. Residues 90-113 carry the Beta-hairpin motif; it reads YYDYYQPEAFMPTSGLYIEKDLAI. The 163-residue stretch at 429–591 folds into the Helicase C-terminal domain; the sequence is QIDDLLDEIQ…ITPITVNKSK (163 aa). One can recognise a UVR domain in the interval 634 to 669; the sequence is TKMIDRAKKDMDKAAKDLDFVEAARYRDEMFALQKI.

It belongs to the UvrB family. As to quaternary structure, forms a heterotetramer with UvrA during the search for lesions. Interacts with UvrC in an incision complex.

It localises to the cytoplasm. Functionally, the UvrABC repair system catalyzes the recognition and processing of DNA lesions. A damage recognition complex composed of 2 UvrA and 2 UvrB subunits scans DNA for abnormalities. Upon binding of the UvrA(2)B(2) complex to a putative damaged site, the DNA wraps around one UvrB monomer. DNA wrap is dependent on ATP binding by UvrB and probably causes local melting of the DNA helix, facilitating insertion of UvrB beta-hairpin between the DNA strands. Then UvrB probes one DNA strand for the presence of a lesion. If a lesion is found the UvrA subunits dissociate and the UvrB-DNA preincision complex is formed. This complex is subsequently bound by UvrC and the second UvrB is released. If no lesion is found, the DNA wraps around the other UvrB subunit that will check the other stand for damage. The chain is UvrABC system protein B from Cytophaga hutchinsonii (strain ATCC 33406 / DSM 1761 / CIP 103989 / NBRC 15051 / NCIMB 9469 / D465).